A 154-amino-acid chain; its full sequence is Regulatory protein RecX (154 aa).

Belongs to the RecX family.

Its subcellular location is the cytoplasm. Its function is as follows. Modulates RecA activity. This chain is Regulatory protein RecX, found in Trichlorobacter lovleyi (strain ATCC BAA-1151 / DSM 17278 / SZ) (Geobacter lovleyi).